The sequence spans 444 residues: Phosphoglucosamine mutase (444 aa).

Catalysis depends on serine 101, which acts as the Phosphoserine intermediate. 4 residues coordinate Mg(2+): serine 101, aspartate 239, aspartate 241, and aspartate 243. Serine 101 carries the phosphoserine modification.

It belongs to the phosphohexose mutase family. Mg(2+) serves as cofactor. Activated by phosphorylation.

The enzyme catalyses alpha-D-glucosamine 1-phosphate = D-glucosamine 6-phosphate. Its function is as follows. Catalyzes the conversion of glucosamine-6-phosphate to glucosamine-1-phosphate. In Alcanivorax borkumensis (strain ATCC 700651 / DSM 11573 / NCIMB 13689 / SK2), this protein is Phosphoglucosamine mutase.